The chain runs to 214 residues: Reticulon-3-A (214 aa).

The segment at 1 to 21 is disordered; it reads MAETSGPQSSHISSSSVGEKG. Residues 26–214 enclose the Reticulon domain; sequence VRDLLYWRDV…LPGALKKKSE (189 aa). The next 2 membrane-spanning stretches (helical) occupy residues 46–66 and 155–175; these read MVLL…YLVL and VFNG…APIV.

In terms of assembly, homodimer. Expressed in the animal hemisphere at the four-cell stage. During gastrulation, expression becomes restricted to the prospective neuroectoderm. At the early tail bud stage, expressed in the head structure. At the tadpole stage, expressed in head and neural tissues including the otic vesicle and optic nerve.

It localises to the endoplasmic reticulum membrane. The protein localises to the golgi apparatus membrane. May be involved in membrane trafficking in the early secretory pathway. The protein is Reticulon-3-A (rtn3-a) of Xenopus laevis (African clawed frog).